The following is a 392-amino-acid chain: NADH-quinone oxidoreductase subunit D 1 (392 aa).

It belongs to the complex I 49 kDa subunit family. As to quaternary structure, NDH-1 is composed of 14 different subunits. Subunits NuoB, C, D, E, F, and G constitute the peripheral sector of the complex.

It is found in the cell inner membrane. The catalysed reaction is a quinone + NADH + 5 H(+)(in) = a quinol + NAD(+) + 4 H(+)(out). In terms of biological role, NDH-1 shuttles electrons from NADH, via FMN and iron-sulfur (Fe-S) centers, to quinones in the respiratory chain. The immediate electron acceptor for the enzyme in this species is believed to be a menaquinone. Couples the redox reaction to proton translocation (for every two electrons transferred, four hydrogen ions are translocated across the cytoplasmic membrane), and thus conserves the redox energy in a proton gradient. In Cytophaga hutchinsonii (strain ATCC 33406 / DSM 1761 / CIP 103989 / NBRC 15051 / NCIMB 9469 / D465), this protein is NADH-quinone oxidoreductase subunit D 1.